A 670-amino-acid polypeptide reads, in one-letter code: Oligopeptidase PepF (670 aa).

Histidine 456 is a binding site for Zn(2+). The active site involves glutamate 457. Residues histidine 460 and histidine 463 each coordinate Zn(2+).

The protein belongs to the peptidase M3B family. Zn(2+) is required as a cofactor.

Its subcellular location is the cytoplasm. Functionally, overexpression results in inhibition of sporulation initiation. This sporulation deficiency could be the result of hydrolysis by PepF of the PhrA peptide, a phosphatase regulator. Thus, overexpression of PepF appears to act at the level of the phosphorelay, most likely through modulation of the negative role played by phosphatases. Overexpression of PepF also affects the activity of the competence and sporulation stimulating factor PhrC. The sequence is that of Oligopeptidase PepF from Bacillus subtilis (strain 168).